Consider the following 456-residue polypeptide: MKKITTYQNKKVLVLGLAKSGVSAAKLLHELGALVTVNDAKQFDQNPDAQDLLTLGIRVVTGGHPIELLDEEFELIVKNPGIPYTNPLVAEALTRKIPIITEVELAGQIAECPIVGITGTNGKTTTTTMIGLLLNADRTAGEARLAGNIGFPASTVAQEATAKDNLVMELSSFQLMGIETFHPQIAVITNIFEAHLDYHGSRKEYVAAKWAIQKNMTAEDTLILNWNQVELQTLAKTTAANVLPFSTKEAVEGAYLLDGKLYFNEEYIMPADELGIPGSHNIENALAAICVAKLKNVSNAQIRQTLTNFSGVPHRTQFVGEVQQRRFYNDSKATNILATEMALSGFDNQKLLLLAGGLDRGNSFDELVPALLGLKAIVLFGETKEKLAEAAKKANIETILFAENVQTAVTIAFDYSEKDDTILLSPACASWDQYPNFEVRGEAFMQAVQQLKESEM.

119-125 (GTNGKTT) contributes to the ATP binding site.

Belongs to the MurCDEF family.

The protein resides in the cytoplasm. The catalysed reaction is UDP-N-acetyl-alpha-D-muramoyl-L-alanine + D-glutamate + ATP = UDP-N-acetyl-alpha-D-muramoyl-L-alanyl-D-glutamate + ADP + phosphate + H(+). It participates in cell wall biogenesis; peptidoglycan biosynthesis. In terms of biological role, cell wall formation. Catalyzes the addition of glutamate to the nucleotide precursor UDP-N-acetylmuramoyl-L-alanine (UMA). The protein is UDP-N-acetylmuramoylalanine--D-glutamate ligase (murD) of Enterococcus faecalis (strain ATCC 700802 / V583).